A 542-amino-acid chain; its full sequence is Putative cysteine ligase BshC (542 aa).

The stretch at 458–487 forms a coiled coil; sequence VAKNAAIIQAQIEFLQQTLERALLSKHEVE.

This sequence belongs to the BshC family.

Its function is as follows. Involved in bacillithiol (BSH) biosynthesis. May catalyze the last step of the pathway, the addition of cysteine to glucosamine malate (GlcN-Mal) to generate BSH. The chain is Putative cysteine ligase BshC from Geobacillus thermodenitrificans (strain NG80-2).